A 382-amino-acid polypeptide reads, in one-letter code: MGKREIHFTPVGRQVQRVLEYPLRLENRSPMSYSRRSRYSPSLSPYDKRRGRSVSRSLSRSPTRSVSSDAENPGNSLYVTGLSHRVTERDLEDHFAKEGKVTDVHLVLDPWTRESRGFGFISMKSVGDANRCIRSLDHSVLQGRVITVEKARRRRGRTPTPGKYLGLRTARGRHKSPSYSPRRSVSCSRSRSRSYSSDRGRSYSPSYGRRGRSSSYSPFYRRRRFYSPSRSPSPDDRYNRRRDRSYSPYYRRRDRSRSYSRNCRARDRSPYYMRRYRSRSRSYSPRYRARDRSCSPYYRGRDRSYSPHYQGRDRSYSPESRYYRRHRSVSGSVSPGGRSMSRSISPRKGRKESRSKSRRHDRQSSMCHSRSARSSTSRSVSP.

Composition is skewed to low complexity over residues 30–45 (PMSY…SLSP), 54–68 (VSRS…SVSS), 177–195 (PSYS…SRSY), and 202–219 (SYSP…YSPF). Disordered regions lie at residues 30–76 (PMSY…PGNS) and 150–382 (KARR…SVSP). A compositionally biased stretch (basic and acidic residues) spans 288-316 (RARDRSCSPYYRGRDRSYSPHYQGRDRSY). Positions 329–343 (VSGSVSPGGRSMSRS) are enriched in low complexity. Over residues 345 to 361 (SPRKGRKESRSKSRRHD) the composition is skewed to basic residues. A compositionally biased stretch (low complexity) spans 364 to 382 (SSMCHSRSARSSTSRSVSP).

This sequence belongs to the splicing factor SR family. SR45 subfamily. As to quaternary structure, component of the spliceosome. Homodimer. Interacts with PRP38, SCL28, SR45, RNU1 and U2AF35B. In terms of processing, phosphorylated. As to expression, expressed in leaves, stems and roots.

The protein resides in the nucleus speckle. Probable splicing factor involved in constitutive and/or alternative splicing events. May bridge the 5' and 3' components of the spliceosome. The protein is Serine/arginine-rich splicing factor SR45a (SR45A) of Arabidopsis thaliana (Mouse-ear cress).